The sequence spans 353 residues: GDSL esterase/lipase APG (353 aa).

The N-terminal stretch at 1-25 (MDRCTSSFLLLTLVSTLSILQISFA) is a signal peptide. Ser-37 acts as the Nucleophile in catalysis. N-linked (GlcNAc...) asparagine glycans are attached at residues Asn-197 and Asn-320. Residues Asp-328 and His-331 contribute to the active site.

This sequence belongs to the 'GDSL' lipolytic enzyme family.

The protein resides in the secreted. The protein is GDSL esterase/lipase APG (APG) of Arabidopsis thaliana (Mouse-ear cress).